The following is a 241-amino-acid chain: Small ribosomal subunit protein uS2 (241 aa).

The protein belongs to the universal ribosomal protein uS2 family.

The protein is Small ribosomal subunit protein uS2 of Salmonella agona (strain SL483).